Here is a 198-residue protein sequence, read N- to C-terminus: Superoxide dismutase [Mn], mitochondrial (198 aa).

His26 is a binding site for Mn(2+). Position 34 is a 3'-nitrotyrosine (Tyr34). N6-acetyllysine; alternate occurs at positions 44 and 51. N6-succinyllysine; alternate is present on residues Lys44 and Lys51. Mn(2+) is bound at residue His74. Lys90 is subject to N6-acetyllysine. 2 positions are modified to N6-acetyllysine; alternate: Lys98 and Lys106. N6-succinyllysine; alternate occurs at positions 98 and 106. Mn(2+) contacts are provided by Asp159 and His163. Lys178 is subject to N6-acetyllysine.

The protein belongs to the iron/manganese superoxide dismutase family. As to quaternary structure, homotetramer. Mn(2+) serves as cofactor. Nitrated under oxidative stress. Nitration coupled with oxidation inhibits the catalytic activity. Post-translationally, acetylation at Lys-98 decreases enzymatic activity. Deacetylated by SIRT3 upon exposure to ionizing radiations or after long fasting. In terms of processing, polyubiquitinated; leading to proteasomal degradation. Deubiquitinated by USP36 which increases protein stability.

The protein resides in the mitochondrion matrix. The enzyme catalyses 2 superoxide + 2 H(+) = H2O2 + O2. Its function is as follows. Destroys superoxide anion radicals which are normally produced within the cells and which are toxic to biological systems. This is Superoxide dismutase [Mn], mitochondrial (SOD2) from Callithrix jacchus (White-tufted-ear marmoset).